The chain runs to 336 residues: Dihydroorotate dehydrogenase (quinone) (336 aa).

FMN contacts are provided by residues 62–66 (AGLDK) and Thr86. Residue Lys66 coordinates substrate. Residue 111–115 (NRMGF) coordinates substrate. FMN-binding residues include Asn139 and Asn172. Asn172 serves as a coordination point for substrate. Ser175 (nucleophile) is an active-site residue. Residue Asn177 participates in substrate binding. Lys217 and Thr245 together coordinate FMN. Substrate is bound at residue 246 to 247 (NT). FMN-binding positions include Gly268, Gly297, and 318-319 (YS).

This sequence belongs to the dihydroorotate dehydrogenase family. Type 2 subfamily. In terms of assembly, monomer. FMN serves as cofactor.

It is found in the cell membrane. The enzyme catalyses (S)-dihydroorotate + a quinone = orotate + a quinol. Its pathway is pyrimidine metabolism; UMP biosynthesis via de novo pathway; orotate from (S)-dihydroorotate (quinone route): step 1/1. Its function is as follows. Catalyzes the conversion of dihydroorotate to orotate with quinone as electron acceptor. The protein is Dihydroorotate dehydrogenase (quinone) of Baumannia cicadellinicola subsp. Homalodisca coagulata.